An 89-amino-acid polypeptide reads, in one-letter code: Putative regulatory protein CLH_1161 (89 aa).

The protein belongs to the RemA family.

This is Putative regulatory protein CLH_1161 from Clostridium botulinum (strain Alaska E43 / Type E3).